Reading from the N-terminus, the 61-residue chain is DNA-directed RNA polymerase subunit 12-like protein (61 aa).

Residues C21, C24, C38, and C41 each contribute to the Zn(2+) site.

It belongs to the archaeal Rpo12/eukaryotic RPC10 RNA polymerase subunit family.

Its subcellular location is the nucleus. This Arabidopsis thaliana (Mouse-ear cress) protein is DNA-directed RNA polymerase subunit 12-like protein (NRPB12L).